The chain runs to 208 residues: Uracil phosphoribosyltransferase (208 aa).

Residues R78, R103, and 130-138 each bind 5-phospho-alpha-D-ribose 1-diphosphate; that span reads DPMLATGGS. Uracil contacts are provided by residues I193 and 198–200; that span reads GDA. D199 serves as a coordination point for 5-phospho-alpha-D-ribose 1-diphosphate.

This sequence belongs to the UPRTase family. Mg(2+) serves as cofactor.

It catalyses the reaction UMP + diphosphate = 5-phospho-alpha-D-ribose 1-diphosphate + uracil. Its pathway is pyrimidine metabolism; UMP biosynthesis via salvage pathway; UMP from uracil: step 1/1. Its activity is regulated as follows. Allosterically activated by GTP. Its function is as follows. Catalyzes the conversion of uracil and 5-phospho-alpha-D-ribose 1-diphosphate (PRPP) to UMP and diphosphate. This is Uracil phosphoribosyltransferase from Enterobacter sp. (strain 638).